A 235-amino-acid polypeptide reads, in one-letter code: MKQPEEELQETLTELDDRAVVDYLRHHPEFFIRNAHAVEAMRVPHPVRGTVSLVEWHMARARNHINVLEENMTLLMEQAHANESLFYRLLHLQSRLVAADSLDEMLVRFHRWARDLGLAGATLRLFPDRWRLGAPSRYTHLALNRQAFEPLRIQRLGQSQHYLGPLNGPELLVVLPEAKAVGSVAMSMMGSDGGLGVILFSSRDPHHYQPGQGTQLLQEIALMLPELLERWIKRV.

This is an uncharacterized protein from Salmonella typhimurium (strain LT2 / SGSC1412 / ATCC 700720).